Consider the following 410-residue polypeptide: Aminopeptidase AmpS (410 aa).

Positions 250, 316, 340, 345, 378, and 380 each coordinate a divalent metal cation.

It belongs to the peptidase M29 family. The cofactor is Co(2+). Zn(2+) serves as cofactor. Mg(2+) is required as a cofactor.

Its function is as follows. Metal-dependent exopeptidase. This is Aminopeptidase AmpS (ampS) from Bacillus subtilis (strain 168).